A 45-amino-acid polypeptide reads, in one-letter code: Pyruvate dehydrogenase E1 component (45 aa).

Homodimer. Thiamine diphosphate is required as a cofactor.

It catalyses the reaction N(6)-[(R)-lipoyl]-L-lysyl-[protein] + pyruvate + H(+) = N(6)-[(R)-S(8)-acetyldihydrolipoyl]-L-lysyl-[protein] + CO2. The pyruvate dehydrogenase complex catalyzes the overall conversion of pyruvate to acetyl-CoA and CO(2). It contains multiple copies of three enzymatic components: pyruvate dehydrogenase (E1), dihydrolipoamide acetyltransferase (E2) and lipoamide dehydrogenase (E3). The protein is Pyruvate dehydrogenase E1 component of Azotobacter vinelandii.